The following is a 536-amino-acid chain: Probable pectinesterase/pectinesterase inhibitor 59 (536 aa).

Residues 1 to 30 form the signal peptide; that stretch reads MNMMMQKLSILFLHLILLVLLCVHPLTTVA. The interval 31–183 is pectinesterase inhibitor 59; it reads DRNSTDWCDK…SHLISNCLAV (153 aa). N33, N91, N116, N159, and N195 each carry an N-linked (GlcNAc...) asparagine glycan. Residues 221 to 522 form a pectinesterase 59 region; that stretch reads NLVVAKDGSG…FTVGKFIAGT (302 aa). Positions 298 and 328 each coordinate substrate. D351 (proton donor; for pectinesterase activity) is an active-site residue. A disulfide bridge connects residues C365 and C385. The Nucleophile; for pectinesterase activity role is filled by D372. Residues R440 and W442 each contribute to the substrate site.

This sequence in the N-terminal section; belongs to the PMEI family. In the C-terminal section; belongs to the pectinesterase family. Expressed in siliques.

Its subcellular location is the secreted. It is found in the cell wall. It carries out the reaction [(1-&gt;4)-alpha-D-galacturonosyl methyl ester](n) + n H2O = [(1-&gt;4)-alpha-D-galacturonosyl](n) + n methanol + n H(+). It functions in the pathway glycan metabolism; pectin degradation; 2-dehydro-3-deoxy-D-gluconate from pectin: step 1/5. Acts in the modification of cell walls via demethylesterification of cell wall pectin. The polypeptide is Probable pectinesterase/pectinesterase inhibitor 59 (PME59) (Arabidopsis thaliana (Mouse-ear cress)).